The primary structure comprises 273 residues: Peptidyl-prolyl cis-trans isomerase E (273 aa).

Positions 1-48 (MPMDYQTEKHRGFAFVEFEEVEDAMSAIDNMNESEIFGRTIRVNVARP) constitute an RRM domain. Residues 77-103 (RKLDEPDIVNPSDTSENVEDLSDEEMR) form a disordered region. The PPIase cyclophilin-type domain occupies 115–271 (FFDIRIGNGD…EPVIISRCGE (157 aa)).

It belongs to the cyclophilin-type PPIase family. PPIase E subfamily.

It is found in the cytoplasm. It carries out the reaction [protein]-peptidylproline (omega=180) = [protein]-peptidylproline (omega=0). With respect to regulation, binds cyclosporin A (CsA). CsA mediates some of its effects via an inhibitory action on PPIase. PPIases accelerate the folding of proteins. It catalyzes the cis-trans isomerization of proline imidic peptide bonds in oligopeptides. This Schistosoma mansoni (Blood fluke) protein is Peptidyl-prolyl cis-trans isomerase E.